We begin with the raw amino-acid sequence, 365 residues long: Mannitol dehydrogenase (365 aa).

Residues C50, H72, C103, C106, C109, C117, and C166 each contribute to the Zn(2+) site.

Belongs to the zinc-containing alcohol dehydrogenase family. Requires Zn(2+) as cofactor.

The protein localises to the cytoplasm. The catalysed reaction is D-mannitol + NAD(+) = D-mannose + NADH + H(+). Its function is as follows. Oxidizes mannitol to mannose. Provides the initial step by which translocated mannitol is committed to central metabolism and, by regulating mannitol pool size, is important in regulating salt tolerance at the cellular level. This Apium graveolens (Celery) protein is Mannitol dehydrogenase (MTD).